The primary structure comprises 66 residues: Large ribosomal subunit protein bL33c (66 aa).

This sequence belongs to the bacterial ribosomal protein bL33 family.

Its subcellular location is the plastid. It localises to the chloroplast. The protein is Large ribosomal subunit protein bL33c of Drimys granadensis.